The following is a 191-amino-acid chain: NF-kappa-B inhibitor-interacting Ras-like protein 2 (191 aa).

The tract at residues 1 to 191 (MGKSCKVVVC…KNKGSGSVDG (191 aa)) is small GTPase-like. 11–18 (GQAAVGKT) serves as a coordination point for GTP. An Effector region motif is present at residues 35–43 (MIETQEDIY). Residues 61-65 (DTRGL) and 120-123 (NKCD) each bind GTP. The segment at 170 to 191 (QPQSKSAFPLSRKNKGSGSVDG) is disordered.

It belongs to the small GTPase superfamily. Ras family. KappaB-Ras subfamily.

Its subcellular location is the cytoplasm. Its function is as follows. Atypical Ras-like protein that acts as a potent regulator of NF-kappa-B activity by preventing the degradation of NF-kappa-B inhibitor beta (NFKBIB) by most signals, explaining why NFKBIB is more resistant to degradation. This Gallus gallus (Chicken) protein is NF-kappa-B inhibitor-interacting Ras-like protein 2 (NKIRAS2).